Reading from the N-terminus, the 356-residue chain is MNRTQPLVLGIESSCDETGVGIVRGTALLSNTVSSSMEEHVRFGGVIPEIASRAHLDAFVPTLQEALADAGVQLDDVDAIAVTSGPGLAGALMVGVCAAKALAVATGKPLYAINHLVAHVGVGLLQEENTLPEHLGALLVSGGHTEILRIRSITDDVELLGSTIDDAAGEAYDKVARLLGLGYPGGPAIDKLARTGNAKAIRFPRGLTQPKYMGTADEPGPHRYDWSFSGLKTAVARCVEQFEARGDEVPVADIAAAFQEAVVDVITSKAVLACTENGITELLLGGGVAANSRLRQLTEQRCRAAGIRLTVPPLELCTDNGAMVAALGAQLVMAGIEPSGISFAPDSSMPVTTVSA.

Residues His115 and His119 each contribute to the Fe cation site. Substrate is bound by residues 139–143 (LVSGG), Asp173, Gly186, Asp190, and Asn291. Asp319 is a Fe cation binding site.

It belongs to the KAE1 / TsaD family. Fe(2+) is required as a cofactor.

It is found in the cytoplasm. It carries out the reaction L-threonylcarbamoyladenylate + adenosine(37) in tRNA = N(6)-L-threonylcarbamoyladenosine(37) in tRNA + AMP + H(+). Required for the formation of a threonylcarbamoyl group on adenosine at position 37 (t(6)A37) in tRNAs that read codons beginning with adenine. Is involved in the transfer of the threonylcarbamoyl moiety of threonylcarbamoyl-AMP (TC-AMP) to the N6 group of A37, together with TsaE and TsaB. TsaD likely plays a direct catalytic role in this reaction. This Arthrobacter sp. (strain FB24) protein is tRNA N6-adenosine threonylcarbamoyltransferase.